The following is a 244-amino-acid chain: tRNA (guanine-N(1)-)-methyltransferase (244 aa).

S-adenosyl-L-methionine-binding positions include Gly-113 and 132–137 (IGDYVL).

The protein belongs to the RNA methyltransferase TrmD family. Homodimer.

It localises to the cytoplasm. It carries out the reaction guanosine(37) in tRNA + S-adenosyl-L-methionine = N(1)-methylguanosine(37) in tRNA + S-adenosyl-L-homocysteine + H(+). Functionally, specifically methylates guanosine-37 in various tRNAs. The chain is tRNA (guanine-N(1)-)-methyltransferase from Shouchella clausii (strain KSM-K16) (Alkalihalobacillus clausii).